We begin with the raw amino-acid sequence, 335 residues long: MVREKITVSTRTLQWKCVESAADSKRLLYGRFILSPLMKGQADTIGIAMRRALLGEIEGTCITRAKSEKISHEYATIMGIQESVHEILMNLKEIVLRSNLYGTCEASICVRGPGYVTAQDIILPPYVEIVDNTQHIASLTEPIELVIGLQIEKNRGYLIKAPNTFQDGSYPIDPVFMPVRNANHSIHSYENGNKEILFLEIWTNGSLTPKEALHEASRNLIDLLIPFLHTKEENLSLEDNQHIVPLPPFTFYDKLAKLTKNKKKMALKSIFIDQSELPPRIYNCLKRSNIYTLLDLLNNSQEDLMKMEHFRIEDVKQILGILEKNFVIDLPKNKF.

Residues 1-231 (MVREKITVST…DLLIPFLHTK (231 aa)) form an alpha N-terminal domain (alpha-NTD) region. An alpha C-terminal domain (alpha-CTD) region spans residues 263-335 (KKMALKSIFI…FVIDLPKNKF (73 aa)).

The protein belongs to the RNA polymerase alpha chain family. In terms of assembly, in plastids the minimal PEP RNA polymerase catalytic core is composed of four subunits: alpha, beta, beta', and beta''. When a (nuclear-encoded) sigma factor is associated with the core the holoenzyme is formed, which can initiate transcription.

The protein localises to the plastid. It is found in the chloroplast. It carries out the reaction RNA(n) + a ribonucleoside 5'-triphosphate = RNA(n+1) + diphosphate. In terms of biological role, DNA-dependent RNA polymerase catalyzes the transcription of DNA into RNA using the four ribonucleoside triphosphates as substrates. The sequence is that of DNA-directed RNA polymerase subunit alpha from Helianthus annuus (Common sunflower).